Reading from the N-terminus, the 60-residue chain is UPF0434 protein Vapar_2640 (60 aa).

Belongs to the UPF0434 family.

The polypeptide is UPF0434 protein Vapar_2640 (Variovorax paradoxus (strain S110)).